The following is a 597-amino-acid chain: MHQVFYQKYRPINFKQTLGQESIRKILVNAINRDKLPNGYIFSGERGTGKTTFAKIIAKAINCLNWDQIDVCNSCDVCKSINTNSAIDIVEIDAASKNGINDIRELVENVFNHPFTFKKKVYILDEAHMLTTQSWGGLLKTLEESPPYVLFIFTTTEFNKIPLTILSRCQSFFFKKITSDLILERLNDIAKKEKIKIEKDALIKIADLSQGSLRDGLSLLDQISNFSDSEKISITDVEKTFNIVDRNAKFTFIKAVLSGDIKEAFNLLDDFESNGLNFTYFLRELFALTVNLYAYAKLKNINVLDSTEKTMIETLNFEKQHYAFLIKAIEENTNFGLSQLTLIDRLKAIVISYNEFFNQKPLTISSPSNEKSLHLETEYLEKKKIKKSNHKQDQKHFSLFEKSFIDKSEKTPKNDEVTNNKFLDTSKLNLANIALAINAFNDNKWINHFQNLLSVFQTKFNDKDKQNNLSYFNNFIDKYSARDIVKATKIVKASSFGIVILFEDQKIAMRLWKEAIEEGNVQATIFQIFNQNLFLASFSEHQYKTTITEETKNQKYQTEVLNLTQLENLAKPFLKEKKRSLSQKMVDKYFKGLFEEK.

44 to 51 (GERGTGKT) is an ATP binding site. Zn(2+)-binding residues include C63, C72, C75, and C78.

The protein belongs to the DnaX/STICHEL family. As to quaternary structure, DNA polymerase III contains a core (composed of alpha, epsilon and theta chains) that associates with a tau subunit. This core dimerizes to form the POLIII' complex. PolIII' associates with the gamma complex (composed of gamma, delta, delta', psi and chi chains) and with the beta chain to form the complete DNA polymerase III complex.

It carries out the reaction DNA(n) + a 2'-deoxyribonucleoside 5'-triphosphate = DNA(n+1) + diphosphate. In terms of biological role, DNA polymerase III is a complex, multichain enzyme responsible for most of the replicative synthesis in bacteria. This DNA polymerase also exhibits 3' to 5' exonuclease activity. This chain is DNA polymerase III subunit gamma/tau (dnaX), found in Mycoplasma genitalium (strain ATCC 33530 / DSM 19775 / NCTC 10195 / G37) (Mycoplasmoides genitalium).